Consider the following 857-residue polypeptide: Protein argonaute-1 (857 aa).

In terms of domain architecture, PAZ spans 227–346 (PVIEFMCEVL…LPLEVCNIVA (120 aa)). 2 interaction with guide RNA regions span residues 309–314 (YFKQKY) and 522–564 (GKTP…LCLK). The region spanning 515-816 (LIIVILPGKT…VAFRARYHLV (302 aa)) is the Piwi domain. Positions 670 to 675 (PEGQLP) are impairs access of bound RNA to the active site. 3 interaction with guide RNA regions span residues 708–712 (RHHTR), 751–759 (HAGIQGTSR), and 788–813 (YVRCTRSVSIPAPAYYARLVAFRARY).

It belongs to the argonaute family. Ago subfamily. As to quaternary structure, interacts with DDB1, DDX5, DDX6, DHX30, DHX36, DDX47, DICER1, AGO2, ELAVL1, HNRNPF, IGF2BP1, ILF3, IMP8, MATR3, MOV10, PABPC1, PRMT5, RBM4, SART3, TNRC6B, UPF1 and YBX1. Associates with polysomes and messenger ribonucleoproteins (mNRPs). Interacts with LIMD1, WTIP and AJUBA. Interacts with APOBEC3F, APOBEC3G and APOBEC3H. Post-translationally, ubiquitinated on surface-exposed lysines by a SCF-like E3 ubiquitin-protein ligase complex containing ZSWIM8 during target-directed microRNA degradation (TDMD), a process that mediates degradation of microRNAs (miRNAs). Ubiquitination by the SCF-like E3 ubiquitin-protein ligase complex containing ZSWIM8 leads to its subsequent degradation, thereby exposing miRNAs for degradation. ZSWIM8 recognizes and binds AGO1 when it is engaged with a TDMD target.

The protein resides in the cytoplasm. The protein localises to the P-body. Its function is as follows. Required for RNA-mediated gene silencing (RNAi). Binds to short RNAs such as microRNAs (miRNAs) or short interfering RNAs (siRNAs), and represses the translation of mRNAs which are complementary to them. Lacks endonuclease activity and does not appear to cleave target mRNAs. Also required for transcriptional gene silencing (TGS) of promoter regions which are complementary to bound short antigene RNAs (agRNAs). In Homo sapiens (Human), this protein is Protein argonaute-1 (AGO1).